A 1863-amino-acid chain; its full sequence is E3 ubiquitin-protein ligase ubr3 (1863 aa).

The segment at 80–151 (TLCGLVWTAN…ESGFCNRHRL (72 aa)) adopts a UBR-type zinc-finger fold. Disordered regions lie at residues 302–330 (LDDSSKEEDQDGLQGVGQRKRVKLSSSTK), 970–995 (PEVERKRERERERETPPSTSSESATF), and 1128–1152 (IPPKKISPGDKKSMDKEERRQRARE). Composition is skewed to basic and acidic residues over residues 971–984 (EVERKRERERERET) and 1134–1152 (SPGDKKSMDKEERRQRARE). The RING-type; degenerate zinc finger occupies 1270–1328 (DSSCLQSVSIGWDGGVYVQTCGHTLHIDCHKSYMESLRNDQVLQGISVDKGEFTCPLCR).

This sequence belongs to the E3 ubiquitin-protein ligase UBR1-like family.

It catalyses the reaction S-ubiquitinyl-[E2 ubiquitin-conjugating enzyme]-L-cysteine + [acceptor protein]-L-lysine = [E2 ubiquitin-conjugating enzyme]-L-cysteine + N(6)-ubiquitinyl-[acceptor protein]-L-lysine.. It participates in protein modification; protein ubiquitination. Functionally, E3 ubiquitin-protein ligase which is a component of the N-end rule pathway. Recognizes and binds to proteins bearing specific N-terminal residues, leading to their ubiquitination and subsequent degradation. Positively regulates hedgehog/shh-signaling pathways that function in eye development, neuronal specification and somite development. Activation of shh up-regulates transcription of ubr3, which in turn promotes hedgehog/shh signaling possibly by controlling negative regulators such as Kif7. This chain is E3 ubiquitin-protein ligase ubr3, found in Danio rerio (Zebrafish).